Reading from the N-terminus, the 65-residue chain is Large ribosomal subunit protein bL35 (65 aa).

2 disordered regions span residues 1–23 (MPKLKTKSGAAKRFKKTGKGGFK) and 36–65 (MTTKRKRHLRGMNQVAKVDTTSLVQQMPYA). Residues 54–65 (DTTSLVQQMPYA) show a composition bias toward polar residues.

The protein belongs to the bacterial ribosomal protein bL35 family.

The chain is Large ribosomal subunit protein bL35 from Francisella tularensis subsp. tularensis (strain FSC 198).